We begin with the raw amino-acid sequence, 326 residues long: Fructose operon regulatory protein (326 aa).

The HTH lacI-type domain maps to 1 to 58 (MTLDEIAKLAGVSKTTASYVINGKAQKYRISEKTQHKVMAVVEQYNFRPDHAASALRA). The H-T-H motif DNA-binding region spans 3-22 (LDEIAKLAGVSKTTASYVIN).

In terms of assembly, homodimer.

Interaction with F1P may induce a structural change in the DNA spacer region between the -35 and -10 elements, thereby facilitating RNAP binding to the promoter to trigger the transcriptional activation of the fru operon. Interaction with F1P does not release FruR from its binding sequence. Functionally, regulates the expression of the fruBKA (fru) operon, which encodes proteins involved in the import and metabolism of fructose. In the absence of fructose 1-phosphate (F1P), binds to the promoter region of fruB, interferes with the binding of the RNA polymerase (RNAP) to the promoter and represses the expression of the operon. In the presence of F1P, activates the transcription of the fru operon by facilitating the binding of RNAP to the promoter. Essential for the expression of the fru operon and thus for growth on fructose. In Vibrio cholerae serotype O1 (strain ATCC 39315 / El Tor Inaba N16961), this protein is Fructose operon regulatory protein.